The following is a 541-amino-acid chain: Light-independent protochlorophyllide reductase subunit B (541 aa).

D36 contributes to the [4Fe-4S] cluster binding site. D287 acts as the Proton donor in catalysis. 422-423 (GL) is a substrate binding site.

It belongs to the ChlB/BchB/BchZ family. In terms of assembly, protochlorophyllide reductase is composed of three subunits; BchL, BchN and BchB. Forms a heterotetramer of two BchB and two BchN subunits. [4Fe-4S] cluster is required as a cofactor.

It carries out the reaction chlorophyllide a + oxidized 2[4Fe-4S]-[ferredoxin] + 2 ADP + 2 phosphate = protochlorophyllide a + reduced 2[4Fe-4S]-[ferredoxin] + 2 ATP + 2 H2O. Its pathway is porphyrin-containing compound metabolism; bacteriochlorophyll biosynthesis (light-independent). Its function is as follows. Component of the dark-operative protochlorophyllide reductase (DPOR) that uses Mg-ATP and reduced ferredoxin to reduce ring D of protochlorophyllide (Pchlide) to form chlorophyllide a (Chlide). This reaction is light-independent. The NB-protein (BchN-BchB) is the catalytic component of the complex. The sequence is that of Light-independent protochlorophyllide reductase subunit B from Rhodopseudomonas palustris (strain HaA2).